The sequence spans 279 residues: Putative pyruvate, phosphate dikinase regulatory protein (279 aa).

Position 153–160 (153–160 (GVSRTSKT)) interacts with ADP.

This sequence belongs to the pyruvate, phosphate/water dikinase regulatory protein family. PDRP subfamily.

It catalyses the reaction N(tele)-phospho-L-histidyl/L-threonyl-[pyruvate, phosphate dikinase] + ADP = N(tele)-phospho-L-histidyl/O-phospho-L-threonyl-[pyruvate, phosphate dikinase] + AMP + H(+). The catalysed reaction is N(tele)-phospho-L-histidyl/O-phospho-L-threonyl-[pyruvate, phosphate dikinase] + phosphate + H(+) = N(tele)-phospho-L-histidyl/L-threonyl-[pyruvate, phosphate dikinase] + diphosphate. In terms of biological role, bifunctional serine/threonine kinase and phosphorylase involved in the regulation of the pyruvate, phosphate dikinase (PPDK) by catalyzing its phosphorylation/dephosphorylation. This Rhodopseudomonas palustris (strain BisB5) protein is Putative pyruvate, phosphate dikinase regulatory protein.